The primary structure comprises 534 residues: Chaperonin GroEL (534 aa).

ATP contacts are provided by residues 29 to 32 (TAGP), 86 to 90 (DGTTT), Gly-413, and Asp-494.

It belongs to the chaperonin (HSP60) family. As to quaternary structure, forms a cylinder of 14 subunits composed of two heptameric rings stacked back-to-back. Interacts with the co-chaperonin GroES.

The protein localises to the cytoplasm. It carries out the reaction ATP + H2O + a folded polypeptide = ADP + phosphate + an unfolded polypeptide.. Functionally, together with its co-chaperonin GroES, plays an essential role in assisting protein folding. The GroEL-GroES system forms a nano-cage that allows encapsulation of the non-native substrate proteins and provides a physical environment optimized to promote and accelerate protein folding. The chain is Chaperonin GroEL from Mycoplasmoides gallisepticum (strain R(low / passage 15 / clone 2)) (Mycoplasma gallisepticum).